Reading from the N-terminus, the 2572-residue chain is Zinc finger homeobox protein 2 (2572 aa).

Disordered stretches follow at residues 1 to 107 (MATL…GLPP) and 343 to 425 (LSPP…ADDY). Positions 8–36 (STTGTTPSPGHNAPSLPSDTFSSSTPSDP) are enriched in low complexity. 2 stretches are compositionally biased toward polar residues: residues 44-53 (ASSTSENMRS) and 389-398 (LNQSSPTSKE). 2 consecutive C2H2-type zinc fingers follow at residues 453–476 (LKCP…REKH) and 508–532 (YRCD…SDKH). Disordered regions lie at residues 537-566 (QGFQ…PKTK), 608-655 (LPPG…LRPD), and 675-710 (RKFP…SPPP). Residues 615–628 (PGPPPPPGATPTSP) show a composition bias toward pro residues. Residues 696–705 (LLGSSSDSLP) are compositionally biased toward low complexity. 2 consecutive C2H2-type zinc fingers follow at residues 821–845 (LRCN…GAAH) and 870–894 (YHCL…TPAH). A disordered region spans residues 929-974 (QLRTPGKAPVTPLAEPPTPEKDAQNKTEQLASEETENKTGPSRDSA). Positions 954-974 (KTEQLASEETENKTGPSRDSA) are enriched in polar residues. The C2H2-type 5 zinc finger occupies 1009–1032 (YRCPLCQEQLVGRPALHFHLSHLH). Residues 1061 to 1171 (PTLSPLDNGQ…PAPADSRHPL (111 aa)) form a disordered region. Residues 1120–1132 (GQPPSPAPSPVPE) show a composition bias toward pro residues. 2 C2H2-type zinc fingers span residues 1191–1217 (YKCT…SHLH) and 1248–1272 (FKCT…SVLH). Disordered regions lie at residues 1269 to 1325 (SVLH…FLSP), 1389 to 1408 (LPAA…LAER), and 1415 to 1434 (MAKE…LPNE). Over residues 1279 to 1311 (TKTDSKIEGPERSQEEPKEGETEGEVGTEKKGP) the composition is skewed to basic and acidic residues. Pro residues predominate over residues 1392 to 1401 (ATPPPPPQPP). The C2H2-type 8 zinc-finger motif lies at 1480–1503 (LACGACGKLFSNMLILKTHEEHVH). The segment at 1528–1591 (PPLAEPPKPP…SSRGNLPPLV (64 aa)) is disordered. Positions 1595–1654 (RRFSRTKFTEFQTQALQSFFETSAYPKDGEVERLASLLGLASRVVVVWFQNARQKARKNA) form a DNA-binding region, homeobox 1. The C2H2-type 9; degenerate zinc-finger motif lies at 1670-1696 (SGCRRCHATFSCVFELVRHLKKCYDDQ). A compositionally biased stretch (acidic residues) spans 1696–1724 (QTLEEEEEEAERGEEEEEVEEEEVEEEQG). 5 disordered regions span residues 1696–1769 (QTLE…SPAH), 1820–1860 (AATS…DKRL), 1912–2065 (ERKG…GMGQ), 2268–2327 (VQTA…NDAL), and 2398–2431 (NALL…EAGE). Residues 1728-1738 (PAGPEGPLPEP) show a composition bias toward pro residues. A C2H2-type 10 zinc finger spans residues 1769–1791 (HTCDQCAISFSSQDLLTSHRRLH). Residues 1857–1916 (DKRLRTTILPEQLEILYRWYMQDSNPTRKMLDCISEEVGLKKRVVQVWFQNTRARERKGQ) constitute a DNA-binding region (homeobox 2). The segment covering 1925–1939 (PSPAVKPPATATPAS) has biased composition (low complexity). A compositionally biased stretch (basic and acidic residues) spans 1949-1963 (KVDDGTGREAPKREA). Residues 1991–2004 (TPEPPLPLLPPPPP) show a composition bias toward pro residues. Residues 2017–2044 (SPESEACSLSAGDLSDSSASSLAEPESP) are compositionally biased toward low complexity. Residues 2045 to 2061 (GAGGTSGGPGGGTGVPD) are compositionally biased toward gly residues. A DNA-binding region (homeobox 3) is located at residues 2065–2124 (QRRYRTQMSSLQLKIMKACYEAYRTPTMQECEVLGEEIGLPKRVIQVWFQNARAKEKKAK). The segment covering 2284–2293 (DQTNTSTAGT) has biased composition (polar residues). The segment covering 2305–2315 (LGDKVSSERKP) has biased composition (basic and acidic residues). A compositionally biased stretch (pro residues) spans 2402–2422 (QPPPQPPEPTATAPPKPPELP). Residues 2451–2471 (YLCRQCKMAFDGEAPATAHQR) form a C2H2-type 11; degenerate zinc finger. Residues 2495–2519 (YHCLACEVLLSGREALASHLRSSAH) form a C2H2-type 12 zinc finger. A disordered region spans residues 2551 to 2572 (EARLPHTDSNPKTTTTSTLLAL). Positions 2563–2572 (TTTTSTLLAL) are enriched in low complexity.

It localises to the nucleus. Its function is as follows. Transcriptional regulator that is critical for the regulation of pain perception and processing of noxious stimuli. The sequence is that of Zinc finger homeobox protein 2 (ZFHX2) from Homo sapiens (Human).